Here is a 57-residue protein sequence, read N- to C-terminus: uncharacterized protein (57 aa).

Residues 34–54 (AALLDAAALVVIPGLLTAAAV) traverse the membrane as a helical segment.

The protein localises to the membrane. This is an uncharacterized protein from Dictyostelium discoideum (Social amoeba).